Consider the following 455-residue polypeptide: Glutamyl-tRNA reductase (455 aa).

Substrate is bound by residues 49–52 (TCNR), serine 109, 114–116 (ETQ), and glutamine 120. Cysteine 50 functions as the Nucleophile in the catalytic mechanism. 189–194 (GAGKMG) contributes to the NADP(+) binding site.

This sequence belongs to the glutamyl-tRNA reductase family. Homodimer.

It carries out the reaction (S)-4-amino-5-oxopentanoate + tRNA(Glu) + NADP(+) = L-glutamyl-tRNA(Glu) + NADPH + H(+). It functions in the pathway porphyrin-containing compound metabolism; protoporphyrin-IX biosynthesis; 5-aminolevulinate from L-glutamyl-tRNA(Glu): step 1/2. In terms of biological role, catalyzes the NADPH-dependent reduction of glutamyl-tRNA(Glu) to glutamate 1-semialdehyde (GSA). This chain is Glutamyl-tRNA reductase, found in Bacillus velezensis (strain DSM 23117 / BGSC 10A6 / LMG 26770 / FZB42) (Bacillus amyloliquefaciens subsp. plantarum).